The following is a 98-amino-acid chain: NADH-ubiquinone oxidoreductase chain 4L (98 aa).

3 helical membrane passes run 1–21 (MTMVYANIFLAFITSLMGLLM), 29–49 (SLLCLEGMMLSLFVMMTITIL), and 61–81 (IILLVFAACEAALGLSLLVMV).

Belongs to the complex I subunit 4L family. In terms of assembly, core subunit of respiratory chain NADH dehydrogenase (Complex I) which is composed of 45 different subunits.

Its subcellular location is the mitochondrion inner membrane. It carries out the reaction a ubiquinone + NADH + 5 H(+)(in) = a ubiquinol + NAD(+) + 4 H(+)(out). Core subunit of the mitochondrial membrane respiratory chain NADH dehydrogenase (Complex I) which catalyzes electron transfer from NADH through the respiratory chain, using ubiquinone as an electron acceptor. Part of the enzyme membrane arm which is embedded in the lipid bilayer and involved in proton translocation. This chain is NADH-ubiquinone oxidoreductase chain 4L (MT-ND4L), found in Ommatophoca rossii (Ross seal).